The following is a 408-amino-acid chain: Cytotoxic granule-associated RNA binding protein tiar-1 (408 aa).

RRM domains follow at residues 46 to 121 (RTLY…WAVE), 135 to 213 (FHVF…WATR), and 241 to 312 (TSVY…WGKT).

In terms of tissue distribution, expressed in the germline and also in somatic tissues. Expressed in Ggonads and oocytes. Expression is slightly reduced in the most proximal oocytes, especially the -1 oocyte. Aggregates mostly in the head neurons, muscles, intestine, vulval and hypodermal cells during heat shock. Expressed only in the intestine as a response to heat shock, starvation and dietary restriction.

It localises to the cytoplasm. The protein resides in the nucleus. It is found in the stress granule. Acts downstream of ced-9 in the induction of germline apoptosis under different stress conditions including starvation, osmotic, oxidative, heat shock and UV stress. Plays a role in the formation of stress granules in response to heat shock and oxidative stress but not in response to osmotic stress. Required for the formation of stress granules in the core gonad but may not play a critical role in this process in the oocytes. Plays an important role in the formation of stress granules in the embryo. Protects female germ cells and embryos from heat shock. The polypeptide is Cytotoxic granule-associated RNA binding protein tiar-1 (Caenorhabditis elegans).